Consider the following 226-residue polypeptide: ATP-dependent Clp protease proteolytic subunit 4 (226 aa).

The active-site Nucleophile is S122. The active site involves H147.

The protein belongs to the peptidase S14 family. Fourteen ClpP subunits assemble into 2 heptameric rings which stack back to back to give a disk-like structure with a central cavity, resembling the structure of eukaryotic proteasomes.

Its subcellular location is the cytoplasm. It catalyses the reaction Hydrolysis of proteins to small peptides in the presence of ATP and magnesium. alpha-casein is the usual test substrate. In the absence of ATP, only oligopeptides shorter than five residues are hydrolyzed (such as succinyl-Leu-Tyr-|-NHMec, and Leu-Tyr-Leu-|-Tyr-Trp, in which cleavage of the -Tyr-|-Leu- and -Tyr-|-Trp bonds also occurs).. Its function is as follows. Cleaves peptides in various proteins in a process that requires ATP hydrolysis. Has a chymotrypsin-like activity. Plays a major role in the degradation of misfolded proteins. This Streptomyces avermitilis (strain ATCC 31267 / DSM 46492 / JCM 5070 / NBRC 14893 / NCIMB 12804 / NRRL 8165 / MA-4680) protein is ATP-dependent Clp protease proteolytic subunit 4.